The sequence spans 366 residues: NADH-quinone oxidoreductase subunit D (366 aa).

The protein belongs to the complex I 49 kDa subunit family. NDH-1 is composed of 14 different subunits. Subunits NuoB, C, D, E, F, and G constitute the peripheral sector of the complex.

It is found in the cell membrane. The catalysed reaction is a quinone + NADH + 5 H(+)(in) = a quinol + NAD(+) + 4 H(+)(out). In terms of biological role, NDH-1 shuttles electrons from NADH, via FMN and iron-sulfur (Fe-S) centers, to quinones in the respiratory chain. The immediate electron acceptor for the enzyme in this species is believed to be a menaquinone. Couples the redox reaction to proton translocation (for every two electrons transferred, four hydrogen ions are translocated across the cytoplasmic membrane), and thus conserves the redox energy in a proton gradient. The protein is NADH-quinone oxidoreductase subunit D of Bacillus thuringiensis (strain Al Hakam).